We begin with the raw amino-acid sequence, 119 residues long: Large ribosomal subunit protein bL20c (119 aa).

It belongs to the bacterial ribosomal protein bL20 family.

The protein localises to the plastid. It is found in the chloroplast. Its function is as follows. Binds directly to 23S ribosomal RNA and is necessary for the in vitro assembly process of the 50S ribosomal subunit. It is not involved in the protein synthesizing functions of that subunit. The protein is Large ribosomal subunit protein bL20c (rpl20) of Oryza sativa (Rice).